Reading from the N-terminus, the 2896-residue chain is 3'-5' exoribonuclease HELZ2 (2896 aa).

C3H1-type zinc fingers lie at residues 90-114 (VCHY…RSRE) and 217-246 (GQPP…HSAV). The C2H2-type; atypical zinc finger occupies 287–311 (LYCPACLVTCHSQEAFENHCASSEH). The C3H1-type 3 zinc-finger motif lies at 327-357 (SPPPGLSKFELCPKPDLCEYGDACTKAHSAQ). The UvrD-like helicase ATP-binding domain maps to 770 to 1126 (VALIAGWGPG…VVLSTVHTCQ (357 aa)). ATP is bound at residue 791–798 (GPFGTGKT). The interaction with THRAP3 stretch occupies residues 810 to 1306 (RRPETKVLIC…ESTEAEDAEA (497 aa)). A DEAA box motif is present at residues 914-917 (DEAA). The residue at position 1253 (Ser1253) is a Phosphoserine. Short sequence motifs (LXXLL motif) lie at residues 1322–1326 (LRELL), 1365–1369 (LRKLL), and 1420–1424 (LVQLL). In terms of domain architecture, RNB spans 1581–1938 (REDCRAFLTF…VLQRQILLAL (358 aa)). An LXXLL motif 4 motif is present at residues 2259–2263 (LEGLP). The interval 2382–2896 (PSRFLERQTY…RVCRRPTMPS (515 aa)) is interaction with THRAP3. The UvrD-like helicase ATP-binding 2 domain occupies 2400-2675 (LNPSQNVAVR…HMLDTQYRMH (276 aa)). 2421-2428 (GPPGTGKT) contributes to the ATP binding site. The short motif at 2476-2480 (LAGLL) is the LXXLL motif 5 element.

The protein belongs to the DNA2/NAM7 helicase family. In terms of assembly, interacts with PPARA (via DNA-binding domain) and PPARG; the interaction stimulates the transcriptional activity of PPARA and PPARG. Interacts with THRAP3; the interaction is direct and HELZ2 and THRAP3 synergistically enhance the transcriptional activity of PPARG. It is probably part of the peroxisome proliferator activated receptor alpha interacting complex (PRIC). As to expression, expressed in various tissues including heart, pancreas, skeletal muscle, colon, spleen, liver, kidney, lung, peripheral blood and placenta.

It is found in the cytoplasm. The catalysed reaction is Exonucleolytic cleavage in the 3'- to 5'-direction to yield nucleoside 5'-phosphates.. It catalyses the reaction ATP + H2O = ADP + phosphate + H(+). In terms of biological role, can degrade highly structured RNAs through its concerted ATP-dependent RNA helicase and 3' to 5' exoribonuclease activities. Shows a strong preference for pyrimidine over purine residues for its nuclease activity. Acts as a transcriptional coactivator for a number of nuclear receptors including PPARA, PPARG, THRA, THRB and RXRA. This is 3'-5' exoribonuclease HELZ2 from Homo sapiens (Human).